A 291-amino-acid chain; its full sequence is Bifunctional protein FolD (291 aa).

Residues 168–170 (GRG), T195, and V236 each bind NADP(+).

The protein belongs to the tetrahydrofolate dehydrogenase/cyclohydrolase family. In terms of assembly, homodimer.

The enzyme catalyses (6R)-5,10-methylene-5,6,7,8-tetrahydrofolate + NADP(+) = (6R)-5,10-methenyltetrahydrofolate + NADPH. The catalysed reaction is (6R)-5,10-methenyltetrahydrofolate + H2O = (6R)-10-formyltetrahydrofolate + H(+). Its pathway is one-carbon metabolism; tetrahydrofolate interconversion. Catalyzes the oxidation of 5,10-methylenetetrahydrofolate to 5,10-methenyltetrahydrofolate and then the hydrolysis of 5,10-methenyltetrahydrofolate to 10-formyltetrahydrofolate. The chain is Bifunctional protein FolD from Bifidobacterium longum (strain DJO10A).